The primary structure comprises 523 residues: 2-isopropylmalate synthase (523 aa).

The 263-residue stretch at 5 to 267 (VIIFDTTLRD…ETGINAKEIH (263 aa)) folds into the Pyruvate carboxyltransferase domain. 4 residues coordinate Mn(2+): Asp14, His202, His204, and Asn238. Residues 392 to 523 (ELQQLVVHSD…QQNKQEFGSV (132 aa)) form a regulatory domain region.

Belongs to the alpha-IPM synthase/homocitrate synthase family. LeuA type 1 subfamily. As to quaternary structure, homodimer. Requires Mn(2+) as cofactor.

The protein localises to the cytoplasm. It carries out the reaction 3-methyl-2-oxobutanoate + acetyl-CoA + H2O = (2S)-2-isopropylmalate + CoA + H(+). Its pathway is amino-acid biosynthesis; L-leucine biosynthesis; L-leucine from 3-methyl-2-oxobutanoate: step 1/4. Its function is as follows. Catalyzes the condensation of the acetyl group of acetyl-CoA with 3-methyl-2-oxobutanoate (2-ketoisovalerate) to form 3-carboxy-3-hydroxy-4-methylpentanoate (2-isopropylmalate). This is 2-isopropylmalate synthase from Shewanella halifaxensis (strain HAW-EB4).